We begin with the raw amino-acid sequence, 353 residues long: Galectin-9 (353 aa).

The region spanning 17 to 147 is the Galectin 1 domain; the sequence is FTGPIQGGLQ…CLKLSFITFQ (131 aa). Residues N47, H60, R64, N74, and 81–87 each bind a beta-D-galactoside; that span reads WGPEERK. The interval 167 to 186 is disordered; the sequence is QFPRTPKGRKQKTQNFRPAH. The region spanning 225–353 is the Galectin 2 domain; it reads FYTPIPNGLY…GDIQLTHVQT (129 aa). Residues H265, R269, T279, and 285–291 contribute to the a beta-D-galactoside site; that span reads WGQEERS.

In terms of assembly, homodimer. In terms of tissue distribution, accentuated expression in liver and thymus of embryo, detected in embryonic heart, brain, lung, liver, and kidney. Highly expressed in adult thymus, small intestine, and liver, and to a lesser extent in lung, kidney, spleen, cardiac, and skeletal muscle. Barely detectable in brain and reticulocyte. Expressed in placenta, uterus and decidua during pregnancy. Expressed in CD4+ T-cells with higher levels in iTreg cells than other T-cell types and sustained high levels throughout iTreg cell differentiation (at protein level). Expressed in myeloid cells in lung. Constitutively expressed in microglia. Isoform 1 is expressed exclusively in the small intestine. Isoform 2 expression in decidua increases in pathological pregnancy from gestation day 7.5 to 13.5 and it is higher than in normal pregnancy. Isoform 3 expression in decidua is higher in normal pregnancy than in pathological pregnancy.

Its subcellular location is the cytoplasm. The protein localises to the nucleus. The protein resides in the secreted. Functionally, binds galactosides. Has high affinity for the Forssman pentasaccharide. Ligand for HAVCR2/TIM3. Binding to HAVCR2 induces T-helper type 1 lymphocyte (Th1) death. Also stimulates bactericidal activity in infected macrophages by causing macrophage activation and IL1B secretion which restricts intracellular bacterial growth. Ligand for P4HB; the interaction retains P4HB at the cell surface of Th2 T-helper cells, increasing disulfide reductase activity at the plasma membrane, altering the plasma membrane redox state and enhancing cell migration. Ligand for CD44; the interaction enhances binding of SMAD3 to the FOXP3 promoter, leading to up-regulation of FOXP3 expression and increased induced regulatory T (iTreg) cell stability and suppressive function. Promotes ability of mesenchymal stromal cells to suppress T-cell proliferation. Expands regulatory T-cells and induces cytotoxic T-cell apoptosis following virus infection. Activates ERK1/2 phosphorylation inducing cytokine (IL-6, IL-8, IL-12) and chemokine (CCL2) production in mast and dendritic cells. Inhibits degranulation and induces apoptosis of mast cells. Induces maturation and migration of dendritic cells. Inhibits natural killer (NK) cell function. Can transform NK cell phenotype from peripheral to decidual during pregnancy. Astrocyte derived galectin-9 enhances microglial TNF production. May play a role in thymocyte-epithelial interactions relevant to the biology of the thymus. May provide the molecular basis for urate flux across cell membranes, allowing urate that is formed during purine metabolism to efflux from cells and serving as an electrogenic transporter that plays an important role in renal and gastrointestinal urate excretion. Highly selective to the anion urate. Acts as an eosinophil chemoattractant. It also inhibits angiogenesis. Suppresses IFNG production by natural killer cells. This Mus musculus (Mouse) protein is Galectin-9 (Lgals9).